The primary structure comprises 243 residues: MSKQKKSEIVNRFRKRFDTKMTELGFTYQNIDLYQQAFSHSSFINDFNMNRLDHNERLEFLGDAVLELTVSRYLFDKHPNLPEGNLTKMRATIVCEPSLVIFANKIGLNEMILLGKGEEKTGGRTRPSLISDAFEAFIGALYLDQGLDIVWKFAEKVIFPHVEQNELLGVVDFKTQFQEYVHQQNKGDVTYNLIKEEGPAHHRLFTSEVILQGEAIAEGKGKTKKESEQRAAESAYKQLKQIK.

Positions V10 to G146 constitute an RNase III domain. E59 lines the Mg(2+) pocket. The active site involves D63. Mg(2+) contacts are provided by D132 and E135. E135 is an active-site residue. Positions D172–Q241 constitute a DRBM domain. Positions G219–A231 are enriched in basic and acidic residues. Residues G219–K243 are disordered.

It belongs to the ribonuclease III family. As to quaternary structure, homodimer. Mg(2+) serves as cofactor.

Its subcellular location is the cytoplasm. It catalyses the reaction Endonucleolytic cleavage to 5'-phosphomonoester.. In terms of biological role, digests double-stranded RNA. Involved in the processing of primary rRNA transcript to yield the immediate precursors to the large and small rRNAs (23S and 16S). Processes some mRNAs, and tRNAs when they are encoded in the rRNA operon. Processes pre-crRNA and tracrRNA of type II CRISPR loci if present in the organism. In Staphylococcus aureus (strain USA300), this protein is Ribonuclease 3.